The chain runs to 162 residues: NADH-quinone oxidoreductase subunit I (162 aa).

4Fe-4S ferredoxin-type domains are found at residues 52-82 (LRRYPNGEERCIACKLCEAICPAQAITIEAG) and 93-122 (TRYDIDMVKCIYCGMCQEACPVDAIVEGPN). Residues C62, C65, C68, C72, C102, C105, C108, and C112 each contribute to the [4Fe-4S] cluster site.

Belongs to the complex I 23 kDa subunit family. In terms of assembly, NDH-1 is composed of 14 different subunits. Subunits NuoA, H, J, K, L, M, N constitute the membrane sector of the complex. Requires [4Fe-4S] cluster as cofactor.

The protein resides in the cell inner membrane. It carries out the reaction a quinone + NADH + 5 H(+)(in) = a quinol + NAD(+) + 4 H(+)(out). Functionally, NDH-1 shuttles electrons from NADH, via FMN and iron-sulfur (Fe-S) centers, to quinones in the respiratory chain. The immediate electron acceptor for the enzyme in this species is believed to be ubiquinone. Couples the redox reaction to proton translocation (for every two electrons transferred, four hydrogen ions are translocated across the cytoplasmic membrane), and thus conserves the redox energy in a proton gradient. The sequence is that of NADH-quinone oxidoreductase subunit I from Methylorubrum populi (strain ATCC BAA-705 / NCIMB 13946 / BJ001) (Methylobacterium populi).